Reading from the N-terminus, the 41-residue chain is Augerpeptide hhe6.1 (41 aa).

3 disulfides stabilise this stretch: Cys11–Cys32, Cys18–Cys35, and Cys31–Cys40.

Expressed by the venom duct.

It is found in the secreted. The sequence is that of Augerpeptide hhe6.1 from Hastula hectica (Sea snail).